The chain runs to 585 residues: MSRGDSMLRFEIKDRDAAGRIGKLEVNGKKIETPAIMPVVNPKQLIVEPKELKRMGFDIIITNSYIIYKDKKLREKALEKGIHRLLDYDGIIEVDSGSFQLMRYGKVEVTNREIVEFQHKIGVDIGTFLDIPTPPDAPREKAEQDLKITLERAKEAESIKQIPMNATVQGSTYLDLRKLAARKLSEMNFEIHPIGAVVPLLESYRFKDVVDIVIASKMGLRPDRPVHLFGAGHPMVFALAVAMGVDLFDSASYALYAKDDRYLTPQGTKRLEELEYFSCSCPVCSKYTPQELREMPKEEREKLLALHNLWVIREEINRVKQAIKEGELWRLVDERARAHPKLYAAYKRLLEYYHYLEEYEPITKKSAFFKISEESLKWPIARRAKERAEKVKAKFPESIPHPIFGEIPKYLSLTYPFAQSESEEDFQIEKPTRENAILYIMAIAEYQFGEGAGEAFRDAEVEIAKTGMPRQVKKNGKRLATVRAEDGLLTLGIEGAKRLHELLPYPVMRVVVNKEAEPFARKGKDVFAKFVEFADPKIRPYDEVLIVNENDELLATGQALLSGREMVLFSSGRAVKTRRGVEEKK.

The active-site Nucleophile is the aspartate 95. Residues aspartate 130 and alanine 196 each contribute to the substrate site. Cysteine 279, cysteine 281, and cysteine 284 together coordinate Zn(2+). One can recognise a PUA domain in the interval 507 to 582; it reads VMRVVVNKEA…RAVKTRRGVE (76 aa).

The protein belongs to the archaeosine tRNA-ribosyltransferase family. Requires Zn(2+) as cofactor.

It carries out the reaction guanosine(15) in tRNA + 7-cyano-7-deazaguanine = 7-cyano-7-carbaguanosine(15) in tRNA + guanine. Its pathway is tRNA modification; archaeosine-tRNA biosynthesis. Functionally, exchanges the guanine residue with 7-cyano-7-deazaguanine (preQ0) at position 15 in the dihydrouridine loop (D-loop) of archaeal tRNAs. In Pyrococcus furiosus (strain ATCC 43587 / DSM 3638 / JCM 8422 / Vc1), this protein is tRNA-guanine(15) transglycosylase.